A 133-amino-acid polypeptide reads, in one-letter code: Capsid protein (133 aa).

Belongs to the Leviviricetes capsid protein family. Homodimer. The homodimers binds to the viral RNA via an operator hairpin, but also to many other RNA sequences in the viral genome; this interaction probably shifts the virus from the replicative to the assembly phase and ensures specific encapsidation of the viral genome. Interacts with the maturation protein A2.

The protein localises to the virion. Capsid protein self-assembles to form an icosahedral capsid with a T=3 symmetry, about 26 nm in diameter, and consisting of 89 capsid proteins dimers (178 capsid proteins). Involved in viral genome encapsidation through the interaction between a capsid protein dimer and the multiple packaging signals present in the RNA genome. Binding of the capsid proteins to the viral RNA induces a conformational change required for efficient T=3 shell formation. The capsid also contains 1 copy of the A2 maturation protein. Functionally, acts as a translational repressor of viral replicase synthesis late in infection. This latter function is the result of capsid protein interaction with an RNA hairpin which contains the replicase ribosome-binding site. This is Capsid protein from Escherichia virus Qbeta (Bacteriophage Q-beta).